The following is a 274-amino-acid chain: Thymidylate synthase (274 aa).

Arg21 is a binding site for dUMP. His51 lines the (6R)-5,10-methylene-5,6,7,8-tetrahydrofolate pocket. Residue 123–124 (RR) participates in dUMP binding. The Nucleophile role is filled by Cys156. DUMP is bound by residues 176–179 (RSAD), Asn187, and 217–219 (HIY). A (6R)-5,10-methylene-5,6,7,8-tetrahydrofolate-binding site is contributed by Asp179. Residue Ala273 participates in (6R)-5,10-methylene-5,6,7,8-tetrahydrofolate binding.

It belongs to the thymidylate synthase family. Bacterial-type ThyA subfamily. In terms of assembly, homodimer.

It is found in the cytoplasm. It catalyses the reaction dUMP + (6R)-5,10-methylene-5,6,7,8-tetrahydrofolate = 7,8-dihydrofolate + dTMP. It functions in the pathway pyrimidine metabolism; dTTP biosynthesis. In terms of biological role, catalyzes the reductive methylation of 2'-deoxyuridine-5'-monophosphate (dUMP) to 2'-deoxythymidine-5'-monophosphate (dTMP) while utilizing 5,10-methylenetetrahydrofolate (mTHF) as the methyl donor and reductant in the reaction, yielding dihydrofolate (DHF) as a by-product. This enzymatic reaction provides an intracellular de novo source of dTMP, an essential precursor for DNA biosynthesis. In Christiangramia forsetii (strain DSM 17595 / CGMCC 1.15422 / KT0803) (Gramella forsetii), this protein is Thymidylate synthase.